The following is a 150-amino-acid chain: Transcriptional repressor NrdR (150 aa).

The segment at 3-34 (CPFCNFSDSKVVDSRPDKGGAAIRRRRECESC) is a zinc-finger region. The ATP-cone domain occupies 49-139 (PLVTKRDGRR…VYRSFKDINE (91 aa)).

Belongs to the NrdR family. Zn(2+) is required as a cofactor.

Negatively regulates transcription of bacterial ribonucleotide reductase nrd genes and operons by binding to NrdR-boxes. The chain is Transcriptional repressor NrdR from Citrifermentans bemidjiense (strain ATCC BAA-1014 / DSM 16622 / JCM 12645 / Bem) (Geobacter bemidjiensis).